Here is a 122-residue protein sequence, read N- to C-terminus: Anti-sigma-F factor antagonist RsfB (122 aa).

In terms of domain architecture, STAS spans isoleucine 7 to valine 115. Serine 61 carries the post-translational modification Phosphoserine.

Belongs to the anti-sigma-factor antagonist family. As to quaternary structure, interacts with anti-sigma-F factor RsbW (UsfX). Its phosphorylation may prevent this interaction. Putative phosphorylation on Ser-61 may prevent interaction with RsbW.

In terms of biological role, positive regulator of sigma-F (SigF) activity. Binds to anti-sigma-F factor RsbW (UsfX) preventing its binding to SigF, thus activating transcription. This is Anti-sigma-F factor antagonist RsfB (rsfB) from Mycobacterium tuberculosis (strain CDC 1551 / Oshkosh).